The sequence spans 230 residues: Orotidine 5'-phosphate decarboxylase (230 aa).

Substrate is bound by residues D10, K32, D59–T68, T119, R180, Q189, G209, and R210. The active-site Proton donor is the K61.

Belongs to the OMP decarboxylase family. Type 1 subfamily. Homodimer.

The catalysed reaction is orotidine 5'-phosphate + H(+) = UMP + CO2. It participates in pyrimidine metabolism; UMP biosynthesis via de novo pathway; UMP from orotate: step 2/2. Its function is as follows. Catalyzes the decarboxylation of orotidine 5'-monophosphate (OMP) to uridine 5'-monophosphate (UMP). The sequence is that of Orotidine 5'-phosphate decarboxylase from Haemophilus influenzae (strain PittEE).